We begin with the raw amino-acid sequence, 558 residues long: Cytochrome P450 monooxygenase sdnT (558 aa).

A helical transmembrane segment spans residues 21-41; it reads IISLTTCFVCAFAVSFVALAI. Residues 298–317 are disordered; sequence QNAGSNTRPKPPKRKQDTQP. Residues Asn-464 and Asn-495 are each glycosylated (N-linked (GlcNAc...) asparagine). Cys-505 is a binding site for heme.

This sequence belongs to the cytochrome P450 family. Heme serves as cofactor.

The protein resides in the membrane. It functions in the pathway antibiotic biosynthesis. In terms of biological role, cytochrome P450 monooxygenase; part of the gene cluster that mediates the biosynthesis of sordarin and hypoxysordarin, glycoside antibiotics with a unique tetracyclic diterpene aglycone structure. First, the geranylgeranyl diphosphate synthase sdnC constructs GGDP from farnesyl diphosphate and isopentenyl diphosphate. The diterpene cyclase sdnA then catalyzes the cyclization of GGDP to afford cycloaraneosene. Cycloaraneosene is then hydroxylated four times by the putative cytochrome P450 monooxygenases sdnB, sdnE, sdnF and sdnH to give a hydroxylated cycloaraneosene derivative such as cycloaraneosene-8,9,13,19-tetraol. Although the order of the hydroxylations is unclear, at least C8, C9 and C13 of the cycloaraneosene skeleton are hydroxylated before the sordaricin formation. Dehydration of the 13-hydroxy group of the hydroxylated cycloaraneosene derivative might be catalyzed by an unassigned hypothetical protein such as sdnG and sdnP to construct the cyclopentadiene moiety. The FAD-dependent oxidoreductase sdnN is proposed to catalyze the oxidation at C9 of the hydroxylated cycloaraneosene derivative and also catalyze the Baeyer-Villiger oxidation to give the lactone intermediate. The presumed lactone intermediate would be hydrolyzed to give an acrolein moiety and a carboxylate moiety. Then, [4+2]cycloaddition would occur between the acrolein moiety and the cyclopentadiene moiety to give sordaricin. SdnN might also be involved in the [4+2]cycloaddition after the hypothesized oxidation to accommodate the oxidized product and prompt the [4+2]cycloaddition. GDP-6-deoxy-D-altrose may be biosynthesized from GDP-D-mannose by the putative GDP-mannose-4,6-dehydratase sdnI and the short-chain dehydrogenase sdnK. The glycosyltransferase sdnJ catalyzes the attachment of 6-deoxy-D-altrose onto the 19-hydroxy group of sordaricin to give 4'-O-demethylsordarin. The methyltransferase sdnD would complete the biosynthesis of sordarin. Sordarin can be further modified into hypoxysordarin. The unique acyl chain at the 3'-hydroxy group of hypoxysordarin would be constructed by an iterative type I PKS sdnO and the trans-acting polyketide methyltransferase sdnL. SdnL would be responsible for the introduction of an alpha-methyl group of the polyketide chain. Alternatively, the beta-lactamase-like protein sdnR might be responsible for the cleavage and transfer of the polyketide chain from the PKS sdnO to sordarin. Two putative cytochrome P450 monooxygenases, sdnQ and sdnT, might catalyze the epoxidations of the polyketide chain to complete the biosynthesis of hypoxysordarin. Transcriptional regulators sdnM and sdnS are presumably encoded for the transcriptional regulation of the expression of the sdn gene cluster. The sequence is that of Cytochrome P450 monooxygenase sdnT from Sordaria araneosa (Pleurage araneosa).